A 183-amino-acid polypeptide reads, in one-letter code: Ras-related protein Rap-2a (183 aa).

10–17 (GSGGVGKS) contributes to the GTP binding site. Positions 32–40 (YDPTIEDFY) match the Effector region motif. Thr35 carries a (Microbial infection) O-linked (Glc) threonine; by C.difficile toxin TcdA, and by P.sordellii toxin TcsL glycan. GTP is bound by residues 57–61 (DTAGT) and 116–119 (NKVD). S-palmitoyl cysteine attachment occurs at residues Cys176 and Cys177. Cys180 is modified (cysteine methyl ester). Residue Cys180 is the site of S-farnesyl cysteine attachment. The propeptide at 181–183 (NIQ) is removed in mature form.

The protein belongs to the small GTPase superfamily. Ras family. In terms of assembly, interacts (GTP-bound form) with RUNDC3A. Interacts with RGS14; the interaction is GTP-dependent. Interacts with PLCE1. Interacts with ARHGAP29, SGSM1, SGSM2 and SGSM3. Interacts (GTP-bound form preferentially) with TNIK (via the CNH domain); the interaction is direct and recruits RAP2A to the E3 ubiquitin ligase NEDD4. Interacts with MINK1. Interacts (GTP-bound form preferentially) with MAP4K4. Interacts with cytoskeletal actin. In terms of processing, ubiquitinated; undergoes 'Lys-63' monoubiquitination and diubiquitination by NEDD4. Multiple lysine residues are probably modified. Ubiquitination requires TNIK, prevents interaction with effectors and inactivates RAP2A. Ubiquitination by the ECS(RAB40B) complex leads to RAP2A localization to lamellipodia plasma membrane, activation, and regulation of sorting at early endosomes for recycling to the lamellipodia plasma membrane. Post-translationally, palmitoylated. Palmitoylation is required for association with recycling endosome membranes and activation of TNIK. (Microbial infection) Glucosylated at Thr-35 by C.difficile toxin TcdA in the colonic epithelium, and by P.sordellii toxin TcsL in the vascular endothelium.

It localises to the midbody. The protein resides in the cell projection. It is found in the lamellipodium membrane. The protein localises to the golgi apparatus. Its subcellular location is the recycling endosome membrane. It localises to the lysosome. The catalysed reaction is GTP + H2O = GDP + phosphate + H(+). Its activity is regulated as follows. Activated by the guanine nucleotide-exchange factors RAPGEF3 and RAPGEF4 in a cAMP-dependent manner. Nucleotide exchange is also specifically stimulated by RAPGEF5, RASGEF1A and RASGEF1B. Small GTP-binding protein which cycles between a GDP-bound inactive and a GTP-bound active form. In its active form interacts with and regulates several effectors including MAP4K4, MINK1 and TNIK. Part of a signaling complex composed of NEDD4, RAP2A and TNIK which regulates neuronal dendrite extension and arborization during development. More generally, it is part of several signaling cascades and regulates cytoskeletal rearrangements, cell migration, cell adhesion and cell spreading. In Homo sapiens (Human), this protein is Ras-related protein Rap-2a.